Reading from the N-terminus, the 125-residue chain is Kappa-casein (125 aa).

The disordered stretch occupies residues 42–63; sequence LPNIDPPTVERRPRPRPSFIAI. An O-linked (GalNAc...) threonine glycan is attached at Thr-97. Ser-104 is modified (phosphoserine; alternate). O-linked (GalNAc...) serine; alternate glycosylation is present at Ser-104. Residue Thr-121 is glycosylated (O-linked (GalNAc...) threonine). Ser-122 is subject to Phosphoserine.

This sequence belongs to the kappa-casein family. Mammary gland specific. Secreted in milk.

It is found in the secreted. Functionally, kappa-casein stabilizes micelle formation, preventing casein precipitation in milk. This Lama guanicoe (Guanaco) protein is Kappa-casein (CSN3).